The chain runs to 89 residues: Large ribosomal subunit protein bL31B (89 aa).

This sequence belongs to the bacterial ribosomal protein bL31 family. Type B subfamily. In terms of assembly, part of the 50S ribosomal subunit.

The chain is Large ribosomal subunit protein bL31B from Aeromonas salmonicida (strain A449).